The chain runs to 230 residues: Cytidylate kinase (230 aa).

10–18 (GFSSTGKST) serves as a coordination point for ATP.

This sequence belongs to the cytidylate kinase family. Type 1 subfamily.

It localises to the cytoplasm. It carries out the reaction CMP + ATP = CDP + ADP. The enzyme catalyses dCMP + ATP = dCDP + ADP. This Flavobacterium johnsoniae (strain ATCC 17061 / DSM 2064 / JCM 8514 / BCRC 14874 / CCUG 350202 / NBRC 14942 / NCIMB 11054 / UW101) (Cytophaga johnsonae) protein is Cytidylate kinase.